The primary structure comprises 632 residues: Phosphomethylpyrimidine synthase (632 aa).

Substrate is bound by residues Asn237, Met266, Tyr295, His331, 351-353, 392-395, and Glu431; these read SRG and DGLR. His435 serves as a coordination point for Zn(2+). Tyr458 serves as a coordination point for substrate. His499 lines the Zn(2+) pocket. Residues Cys579, Cys582, and Cys587 each contribute to the [4Fe-4S] cluster site.

This sequence belongs to the ThiC family. Homodimer. [4Fe-4S] cluster is required as a cofactor.

The catalysed reaction is 5-amino-1-(5-phospho-beta-D-ribosyl)imidazole + S-adenosyl-L-methionine = 4-amino-2-methyl-5-(phosphooxymethyl)pyrimidine + CO + 5'-deoxyadenosine + formate + L-methionine + 3 H(+). The protein operates within cofactor biosynthesis; thiamine diphosphate biosynthesis. Functionally, catalyzes the synthesis of the hydroxymethylpyrimidine phosphate (HMP-P) moiety of thiamine from aminoimidazole ribotide (AIR) in a radical S-adenosyl-L-methionine (SAM)-dependent reaction. The polypeptide is Phosphomethylpyrimidine synthase (Chromobacterium violaceum (strain ATCC 12472 / DSM 30191 / JCM 1249 / CCUG 213 / NBRC 12614 / NCIMB 9131 / NCTC 9757 / MK)).